The chain runs to 216 residues: Ethylene-inducing xylanase (216 aa).

A signal peptide spans 1 to 19; the sequence is MVSFSSLFVAACAAVTAFA. Residues 28–216 form the GH11 domain; sequence AITTSQQGTS…SSGSSDITVS (189 aa). Glutamate 112 (nucleophile) is an active-site residue. Residue glutamate 203 is the Proton donor of the active site.

The protein belongs to the glycosyl hydrolase 11 (cellulase G) family.

Its subcellular location is the secreted. It catalyses the reaction Endohydrolysis of (1-&gt;4)-beta-D-xylosidic linkages in xylans.. Its pathway is glycan degradation; xylan degradation. In terms of biological role, endo-1,4-beta-xylanase involved in the hydrolysis of xylan, a major structural heterogeneous polysaccharide found in plant biomass representing the second most abundant polysaccharide in the biosphere, after cellulose. Acts as a pathogen-associated molecular pattern (PAMP) that can trigger plant cell death. Triggers a series of immune responses in citrus fruit and enhanced the resistance of citrus and other fruit against fungal pathogens. This is Ethylene-inducing xylanase from Penicillium digitatum (strain Pd1 / CECT 20795) (Green mold).